The primary structure comprises 1096 residues: Carbamoyl phosphate synthase large chain (1096 aa).

The carboxyphosphate synthetic domain stretch occupies residues 1-402 (MPKRDDINSV…ALQKALRSLE (402 aa)). Positions 129, 169, 175, 176, 208, 210, 215, 241, 242, 243, 285, and 299 each coordinate ATP. An ATP-grasp 1 domain is found at 133-328 (KDLVIESGAD…IAKIAAKLAI (196 aa)). Q285, E299, and N301 together coordinate Mg(2+). Mn(2+) contacts are provided by Q285, E299, and N301. Residues 403–547 (KRGSSFHWGP…YSSYDSETEI (145 aa)) are oligomerization domain. The carbamoyl phosphate synthetic domain stretch occupies residues 548-950 (VPSDRRKVII…AFAKSQEAAF (403 aa)). The region spanning 676 to 870 (SGILDTAGLV…LAKAASLVMV (195 aa)) is the ATP-grasp 2 domain. Residues R712, R754, L756, E761, G786, I787, H788, S789, Q829, and E841 each contribute to the ATP site. Q829, E841, and N843 together coordinate Mg(2+). 3 residues coordinate Mn(2+): Q829, E841, and N843. An MGS-like domain is found at 951–1095 (GGLPLSGTVF…QDYAIAREAR (145 aa)). The interval 951 to 1096 (GGLPLSGTVF…DYAIAREARR (146 aa)) is allosteric domain.

The protein belongs to the CarB family. In terms of assembly, composed of two chains; the small (or glutamine) chain promotes the hydrolysis of glutamine to ammonia, which is used by the large (or ammonia) chain to synthesize carbamoyl phosphate. Tetramer of heterodimers (alpha,beta)4. The cofactor is Mg(2+). Mn(2+) serves as cofactor.

It catalyses the reaction hydrogencarbonate + L-glutamine + 2 ATP + H2O = carbamoyl phosphate + L-glutamate + 2 ADP + phosphate + 2 H(+). The enzyme catalyses hydrogencarbonate + NH4(+) + 2 ATP = carbamoyl phosphate + 2 ADP + phosphate + 2 H(+). Its pathway is amino-acid biosynthesis; L-arginine biosynthesis; carbamoyl phosphate from bicarbonate: step 1/1. The protein operates within pyrimidine metabolism; UMP biosynthesis via de novo pathway; (S)-dihydroorotate from bicarbonate: step 1/3. Its function is as follows. Large subunit of the glutamine-dependent carbamoyl phosphate synthetase (CPSase). CPSase catalyzes the formation of carbamoyl phosphate from the ammonia moiety of glutamine, carbonate, and phosphate donated by ATP, constituting the first step of 2 biosynthetic pathways, one leading to arginine and/or urea and the other to pyrimidine nucleotides. The large subunit (synthetase) binds the substrates ammonia (free or transferred from glutamine from the small subunit), hydrogencarbonate and ATP and carries out an ATP-coupled ligase reaction, activating hydrogencarbonate by forming carboxy phosphate which reacts with ammonia to form carbamoyl phosphate. The polypeptide is Carbamoyl phosphate synthase large chain (Clavibacter michiganensis subsp. michiganensis (strain NCPPB 382)).